The sequence spans 820 residues: LPS-assembly protein LptD (820 aa).

The tract at residues 1–27 is disordered; the sequence is MDLSSLPDPLRPTHSRLPARRRDRAEP. A compositionally biased stretch (basic residues) spans 13–22; the sequence is THSRLPARRR.

This sequence belongs to the LptD family. As to quaternary structure, component of the lipopolysaccharide transport and assembly complex. Interacts with LptE and LptA.

Functionally, together with LptE, is involved in the assembly of lipopolysaccharide (LPS) at the surface of the outer membrane. The sequence is that of LPS-assembly protein LptD from Paracidovorax citrulli (strain AAC00-1) (Acidovorax citrulli).